We begin with the raw amino-acid sequence, 1045 residues long: Probable beta-glucosidase E (1045 aa).

Residues 1–74 (MAPPDSTHGG…SGSYQLRPVD (74 aa)) form a disordered region. Residues 1 to 163 (MAPPDSTHGG…PVKYARIWWR (163 aa)) are Cytoplasmic-facing. The span at 11-20 (SFRDHLKTND) shows a compositional bias: basic and acidic residues. A helical; Signal-anchor for type II membrane protein membrane pass occupies residues 164 to 184 (TLLAVIVTLAVVVWGFLSFAV). Over 185 to 1045 (SHREEPKVWP…SRDLPLMGEY (861 aa)) the chain is Extracellular. 3 N-linked (GlcNAc...) asparagine glycosylation sites follow: N226, N234, and N402. The active site involves D430. 6 N-linked (GlcNAc...) asparagine glycosylation sites follow: N473, N512, N577, N893, N902, and N988.

It belongs to the glycosyl hydrolase 3 family.

It localises to the cell membrane. It catalyses the reaction Hydrolysis of terminal, non-reducing beta-D-glucosyl residues with release of beta-D-glucose.. It participates in glycan metabolism; cellulose degradation. Beta-glucosidases are one of a number of cellulolytic enzymes involved in the degradation of cellulosic biomass. Catalyzes the last step releasing glucose from the inhibitory cellobiose. The sequence is that of Probable beta-glucosidase E (bglE) from Neosartorya fischeri (strain ATCC 1020 / DSM 3700 / CBS 544.65 / FGSC A1164 / JCM 1740 / NRRL 181 / WB 181) (Aspergillus fischerianus).